The sequence spans 880 residues: Valine--tRNA ligase (880 aa).

Positions 48 to 58 match the 'HIGH' region motif; it reads PNITGKLHLGH. The 'KMSKS' region motif lies at 527 to 531; it reads KMSKS. Lys-530 contributes to the ATP binding site. 2 coiled-coil regions span residues 717–741 and 810–880; these read KEEL…AIRN and LFDL…KSLK.

Belongs to the class-I aminoacyl-tRNA synthetase family. ValS type 1 subfamily. In terms of assembly, monomer.

It localises to the cytoplasm. The enzyme catalyses tRNA(Val) + L-valine + ATP = L-valyl-tRNA(Val) + AMP + diphosphate. Catalyzes the attachment of valine to tRNA(Val). As ValRS can inadvertently accommodate and process structurally similar amino acids such as threonine, to avoid such errors, it has a 'posttransfer' editing activity that hydrolyzes mischarged Thr-tRNA(Val) in a tRNA-dependent manner. The polypeptide is Valine--tRNA ligase (Clostridium tetani (strain Massachusetts / E88)).